The chain runs to 459 residues: MIFYNSLSGQKEQFKPIEANKIKMYACGVTVYDDCHIGHARTYIAFDVINRYFKYRGYDVTLVRNITNIDDKIIKRANENGESTTELVERNIKAMHDVFARLNILKPSKEPRATETIPEMVAMIETLIKKGYAYQGANGDVFYRVTKFADYGKLSKQNLEALQQGSRVDVVEEKENPMDFVLWKMAKEGEPAWDSPWGAGRPGWHIECSAMSKKLLGNTFDIHAGGSDLRFPHHENEIAQSEACNECTFANYWLHSGMVKVNAEKMSKSLNNFFTIVEVLEEYHPEVVRYFLASTVYRSEINYSKENLENAKASVERLFNALRDIEPIEVNLPDDASEYEEKFIKAMDNDFNTPEALAVLFSLAKEINTLKTTNKYKASGYAYLLRKLCDVLGILFTDIEEYFKQGDGADASEIEKLIAERTQAKKDKNYARADEIRNQLQQQGIILEDSATGTTWKKG.

A Zn(2+)-binding site is contributed by Cys-27. The 'HIGH' region motif lies at 29 to 39; the sequence is VTVYDDCHIGH. 3 residues coordinate Zn(2+): Cys-208, His-233, and Glu-237. The 'KMSKS' region signature appears at 265–269; the sequence is KMSKS. Lys-268 is a binding site for ATP.

Belongs to the class-I aminoacyl-tRNA synthetase family. Monomer. Zn(2+) is required as a cofactor.

It is found in the cytoplasm. The catalysed reaction is tRNA(Cys) + L-cysteine + ATP = L-cysteinyl-tRNA(Cys) + AMP + diphosphate. The polypeptide is Cysteine--tRNA ligase (Francisella tularensis subsp. mediasiatica (strain FSC147)).